Reading from the N-terminus, the 1200-residue chain is uncharacterized protein (1200 aa).

Disordered regions lie at residues 282 to 302 (SQES…GCTS), 323 to 372 (LSEA…PQGS), 392 to 491 (SQEP…KASL), 510 to 568 (RAKS…RIGA), and 1056 to 1200 (SCPE…LASL). Residues 420–435 (ASSPRLSPASPAAAAS) are compositionally biased toward low complexity. Residues 437-448 (TKIEVKTKERNG) show a composition bias toward basic and acidic residues. Polar residues predominate over residues 518-527 (GTTQTKTSGP). Over residues 1137-1153 (EDGKGSHKLPDPAREHL) the composition is skewed to basic and acidic residues. A compositionally biased stretch (low complexity) spans 1160–1171 (RQQPPRQSQVPR). Residues 1175 to 1200 (GSFSSEGTDSQTSLEDSPQTSPLASL) show a composition bias toward polar residues.

This is an uncharacterized protein from Homo sapiens (Human).